The following is a 436-amino-acid chain: 3-ketoacyl-CoA thiolase (436 aa).

The active-site Acyl-thioester intermediate is cysteine 99. Active-site proton acceptor residues include histidine 392 and cysteine 422.

Belongs to the thiolase-like superfamily. Thiolase family. In terms of assembly, heterotetramer of two alpha chains (FadJ) and two beta chains (FadI).

The protein resides in the cytoplasm. The catalysed reaction is an acyl-CoA + acetyl-CoA = a 3-oxoacyl-CoA + CoA. It functions in the pathway lipid metabolism; fatty acid beta-oxidation. Catalyzes the final step of fatty acid oxidation in which acetyl-CoA is released and the CoA ester of a fatty acid two carbons shorter is formed. The protein is 3-ketoacyl-CoA thiolase of Escherichia coli (strain 55989 / EAEC).